The primary structure comprises 158 residues: Transcription elongation factor GreA (158 aa).

A coiled-coil region spans residues 47-73 (AEYHAAREKQSFIEGRIQELQAKLARA).

The protein belongs to the GreA/GreB family.

Necessary for efficient RNA polymerase transcription elongation past template-encoded arresting sites. The arresting sites in DNA have the property of trapping a certain fraction of elongating RNA polymerases that pass through, resulting in locked ternary complexes. Cleavage of the nascent transcript by cleavage factors such as GreA or GreB allows the resumption of elongation from the new 3'terminus. GreA releases sequences of 2 to 3 nucleotides. This Thermodesulfovibrio yellowstonii (strain ATCC 51303 / DSM 11347 / YP87) protein is Transcription elongation factor GreA.